A 791-amino-acid polypeptide reads, in one-letter code: Ataxin-1 (791 aa).

A compositionally biased stretch (basic and acidic residues) spans 1–30; it reads MKSNQERSNECLPPKKREIPATSRPSEEKA. Residues 1–36 form a disordered region; the sequence is MKSNQERSNECLPPKKREIPATSRPSEEKATALPSD. A Glycyl lysine isopeptide (Lys-Gly) (interchain with G-Cter in SUMO) cross-link involves residue K16. Phosphoserine occurs at positions 81 and 87. 2 disordered regions span residues 187-240 and 298-402; these read SQAP…TSPP and EVLN…HRSY. Residue K193 forms a Glycyl lysine isopeptide (Lys-Gly) (interchain with G-Cter in SUMO) linkage. S213 carries the phosphoserine modification. T218 bears the Phosphothreonine mark. Composition is skewed to polar residues over residues 219-236, 312-327, and 362-388; these read QQNQYIHISSSPQSSGRA, ASSSVELSLGKASSKS, and PNSSTPSADLEAQQTTHREASPSTLND. S229 is modified (phosphoserine). The self-association stretch occupies residues 470–580; that stretch reads VGSPDMDTPG…TEDFIQSAEI (111 aa). Residues 514–791 form an interaction with USP7 region; the sequence is LVTQAAYPAM…CIEGRSNVGK (278 aa). The segment at 516–742 is RNA-binding; the sequence is TQAAYPAMVQ…FLSKIEPSKP (227 aa). One can recognise an AXH domain in the interval 538–669; the sequence is SPTTASPTLP…SLTLKNLKNG (132 aa). Residues K585, K672, and K721 each participate in a glycyl lysine isopeptide (Lys-Gly) (interchain with G-Cter in SUMO) cross-link. Positions 736–774 are disordered; sequence KIEPSKPTATRKRRWSAPETRKLEKSEDEPPLTLPKPSL. S751 is subject to Phosphoserine. Residues 770 to 773 carry the Nuclear localization signal motif; it reads PKPS.

This sequence belongs to the ATXN1 family. Homooligomer. Interacts with PQBP1, UBQLN4 and USP7. Interacts with ANP32A. Interacts with CIC. Directly interacts with RBPJ; this interaction is disrupted in the presence of Notch intracellular domain. Interacts with ATXN1L; competes with ATXN1L for RBPJ-binding. Found in a complex with CIC and ATXN1L. Ubiquitinated by UBE3A, leading to its degradation by the proteasome. The presence of poly-Gln repeats in trangenic models developed to replicate phenotypes of the spinocerebellar ataxia 1 disease (SCA1) impair ubiquitination and degradation, leading to accumulation of Atxn1 in neurons and subsequent toxicity. In terms of processing, sumoylation is dependent on nuclear localization and phosphorylation at Ser-751. In terms of tissue distribution, expressed in the cortex and hypothalamus (at protein level). Widely expressed. In brain, the pattern of distribution is limited to neuron populations.

The protein resides in the cytoplasm. Its subcellular location is the nucleus. Functionally, chromatin-binding factor that repress Notch signaling in the absence of Notch intracellular domain by acting as a CBF1 corepressor. Binds to the HEY promoter and might assist, along with NCOR2, RBPJ-mediated repression. May be involved in RNA metabolism. In concert with CIC and ATXN1L, involved in brain development. In Mus musculus (Mouse), this protein is Ataxin-1 (Atxn1).